We begin with the raw amino-acid sequence, 491 residues long: MAIQLSDKPLLEWAGDTLAIALFEDAVELTGELASLDEKFAGILKELIAEEEFTGKANSTVFTRVSANIPVRKIILVGLGKTEAFNIDTLRRAAAAVGKVGKKQKSKVIGLSFPLWNNDPTASSQAIAEGVQLALYQDNRFKSDPDDKGSQVETVELLGFAGQEAAINRANQIVSGVILARQLVAAPANSVTPITMAETAQQIAQDYGLQIEILEQEDCEKLGMGAFLGVALASDLPPKFIHLTYKPESTPKRKLAIVGKGLTFDSGGLNIKGAGSGIETMKIDMGGAAATLGAAKAIAQIKPNVEVHFISAVTENMISGKAMHPGDILTASNGKTIEVNNTDAEGRLTLADALVYTDKLGLDAIVDLATLTGANVIALGDDIAGLYTPDDALAGQLEQAASESGEKIWRMPLEEKYFEGLKSGIADMKNTGPRPGGSITAALFLKQFVKDTPWAHLDIAGPVWADKENGYNGPGATGYGVRLLVDWVLSE.

2 residues coordinate Mn(2+): lysine 260 and aspartate 265. Lysine 272 is a catalytic residue. Mn(2+) contacts are provided by aspartate 284, aspartate 343, and glutamate 345. Arginine 347 is an active-site residue.

It belongs to the peptidase M17 family. Requires Mn(2+) as cofactor.

It is found in the cytoplasm. The enzyme catalyses Release of an N-terminal amino acid, Xaa-|-Yaa-, in which Xaa is preferably Leu, but may be other amino acids including Pro although not Arg or Lys, and Yaa may be Pro. Amino acid amides and methyl esters are also readily hydrolyzed, but rates on arylamides are exceedingly low.. It carries out the reaction Release of an N-terminal amino acid, preferentially leucine, but not glutamic or aspartic acids.. In terms of biological role, presumably involved in the processing and regular turnover of intracellular proteins. Catalyzes the removal of unsubstituted N-terminal amino acids from various peptides. The protein is Probable cytosol aminopeptidase of Trichormus variabilis (strain ATCC 29413 / PCC 7937) (Anabaena variabilis).